A 1123-amino-acid chain; its full sequence is Telomerase reverse transcriptase (1123 aa).

An RNA-interacting domain 1 region spans residues 1 to 230 (MPRAPRCRAV…ARRRRGSPGS (230 aa)). The segment at 58–197 (VPWGARPPPA…APGLPGLPGL (140 aa)) is GQ motif. Positions 137 to 141 (WGLLL) are required for regulating specificity for telomeric DNA and for processivity for primer elongation. The segment at 202–311 (AGAGASADLR…GVPHDPAHPE (110 aa)) is disordered. The Bipartite nuclear localization signal signature appears at 222–240 (RRRRGSPGSGVPLAKRPRR). Ser-227 bears the Phosphoserine; by PKB/AKT1 mark. The interval 231 to 308 (GVPLAKRPRR…GPQGVPHDPA (78 aa)) is linker. Positions 260–279 (PPVSEAPAVTPAVAASPAAS) are enriched in low complexity. The RNA-interacting domain 2 stretch occupies residues 309–539 (HPETKRFLYC…LARFLVLVDG (231 aa)). A TFLY; involved in RNA binding motif is present at residues 312-317 (TKRFLY). The interval 360 to 510 (ARRMRRLPAR…MKVRDCTWLH (151 aa)) is QFP motif. The CP motif stretch occupies residues 381-401 (LGNHARCPYRALLRTHCPLRA). Ser-446 is subject to Phosphoserine; by DYRK2. Positions 595 to 926 (EVRRHREARP…CLFPWCGLLL (332 aa)) constitute a Reverse transcriptase domain. A Phosphotyrosine; by SRC-type Tyr-kinases modification is found at Tyr-697. Asp-702, Asp-859, and Asp-860 together coordinate Mg(2+). Positions 905-919 (LGSAAPLQLPAHCLF) are required for oligomerization. Positions 921-925 (WCGLL) are primer grip sequence. Residues 927–1123 (DTRTLEVSCD…LTADFKTILD (197 aa)) are CTE.

Belongs to the reverse transcriptase family. Telomerase subfamily. In terms of assembly, catalytic component of the telomerase holoenzyme complex composed of one molecule of TERT, one molecule of WRAP53/TCAB1, two molecules of H/ACA ribonucleoprotein complex subunits DKC1, NOP10, NHP2 and GAR1, and a telomerase RNA template component (TERC). The telomerase holoenzyme complex is associated with TEP1, SMG6/EST1A and POT1. The molecular chaperone HSP90/P23 complex is required for correct assembly and stabilization of the active telomerase. Interacts directly with HSP90A and PTGES3. Interacts with HSPA1A; the interaction occurs in the absence of TERC and dissociates once the complex has formed. Interacts with RAN; the interaction promotes nuclear export of TERT. Interacts with XPO1. Interacts with PTPN11; the interaction retains TERT in the nucleus. Interacts with NCL (via RRM1 and C-terminal RRM4/Arg/Gly-rich domains); the interaction is important for nucleolar localization of TERT. Interacts with SMARCA4 (via the bromodomain); the interaction regulates Wnt-mediated signaling. Interacts with MCRS1 (isoform MCRS2); the interaction inhibits in vitro telomerase activity. Interacts with PIF1; the interaction has no effect on the elongation activity of TERT. Interacts with PML; the interaction recruits TERT to PML bodies and inhibits telomerase activity. Interacts with GNL3L. Interacts with isoform 1 and isoform 2 of NVL. Interacts with DHX36. Interacts with ATF7. Phosphorylation at Tyr-697 under oxidative stress leads to translocation of TERT to the cytoplasm and reduces its antiapoptotic activity. Dephosphorylated by SHP2/PTPN11 leading to nuclear retention. Phosphorylation at Ser-227 by the AKT pathway promotes nuclear location. Phosphorylation at the G2/M phase at Ser-446 by DYRK2 promotes ubiquitination by the EDVP complex and degradation. Post-translationally, ubiquitinated by the EDVP complex, a E3 ligase complex following phosphorylation at Ser-446 by DYRK2. Ubiquitinated leads to proteasomal degradation.

It localises to the nucleus. The protein resides in the nucleolus. Its subcellular location is the nucleoplasm. It is found in the chromosome. The protein localises to the telomere. It localises to the cytoplasm. The protein resides in the PML body. The enzyme catalyses DNA(n) + a 2'-deoxyribonucleoside 5'-triphosphate = DNA(n+1) + diphosphate. Telomerase is a ribonucleoprotein enzyme essential for the replication of chromosome termini in most eukaryotes. Active in progenitor and cancer cells. Inactive, or very low activity, in normal somatic cells. Catalytic component of the teleromerase holoenzyme complex whose main activity is the elongation of telomeres by acting as a reverse transcriptase that adds simple sequence repeats to chromosome ends by copying a template sequence within the RNA component of the enzyme. Catalyzes the RNA-dependent extension of 3'-chromosomal termini with the 6-nucleotide telomeric repeat unit, 5'-TTAGGG-3'. The catalytic cycle involves primer binding, primer extension and release of product once the template boundary has been reached or nascent product translocation followed by further extension. More active on substrates containing 2 or 3 telomeric repeats. Telomerase activity is regulated by a number of factors including telomerase complex-associated proteins, chaperones and polypeptide modifiers. Modulates Wnt signaling. Plays important roles in aging and antiapoptosis. In Canis lupus familiaris (Dog), this protein is Telomerase reverse transcriptase (TERT).